We begin with the raw amino-acid sequence, 372 residues long: Phospho-N-acetylmuramoyl-pentapeptide-transferase (372 aa).

The next 10 membrane-spanning stretches (helical) occupy residues Ser21–Gly41, Thr71–Ala91, Val98–Leu118, Tyr134–Leu154, Met176–Ile196, Gly211–Ser231, Val251–His271, Val275–Met295, Ile300–Val320, and Gln349–Leu369.

It belongs to the glycosyltransferase 4 family. MraY subfamily. Mg(2+) is required as a cofactor.

Its subcellular location is the cell inner membrane. It catalyses the reaction UDP-N-acetyl-alpha-D-muramoyl-L-alanyl-gamma-D-glutamyl-meso-2,6-diaminopimeloyl-D-alanyl-D-alanine + di-trans,octa-cis-undecaprenyl phosphate = di-trans,octa-cis-undecaprenyl diphospho-N-acetyl-alpha-D-muramoyl-L-alanyl-D-glutamyl-meso-2,6-diaminopimeloyl-D-alanyl-D-alanine + UMP. It participates in cell wall biogenesis; peptidoglycan biosynthesis. In terms of biological role, catalyzes the initial step of the lipid cycle reactions in the biosynthesis of the cell wall peptidoglycan: transfers peptidoglycan precursor phospho-MurNAc-pentapeptide from UDP-MurNAc-pentapeptide onto the lipid carrier undecaprenyl phosphate, yielding undecaprenyl-pyrophosphoryl-MurNAc-pentapeptide, known as lipid I. This Psychrobacter arcticus (strain DSM 17307 / VKM B-2377 / 273-4) protein is Phospho-N-acetylmuramoyl-pentapeptide-transferase.